Consider the following 142-residue polypeptide: Large ribosomal subunit protein uL13 (142 aa).

The protein belongs to the universal ribosomal protein uL13 family. In terms of assembly, part of the 50S ribosomal subunit.

Its function is as follows. This protein is one of the early assembly proteins of the 50S ribosomal subunit, although it is not seen to bind rRNA by itself. It is important during the early stages of 50S assembly. This Idiomarina loihiensis (strain ATCC BAA-735 / DSM 15497 / L2-TR) protein is Large ribosomal subunit protein uL13.